The primary structure comprises 275 residues: Large ribosomal subunit protein uL2 (275 aa).

Residues glycine 223–glycine 275 form a disordered region. The span at aspartate 230 to glycine 240 shows a compositional bias: basic and acidic residues.

Belongs to the universal ribosomal protein uL2 family. Part of the 50S ribosomal subunit. Forms a bridge to the 30S subunit in the 70S ribosome.

One of the primary rRNA binding proteins. Required for association of the 30S and 50S subunits to form the 70S ribosome, for tRNA binding and peptide bond formation. It has been suggested to have peptidyltransferase activity; this is somewhat controversial. Makes several contacts with the 16S rRNA in the 70S ribosome. The sequence is that of Large ribosomal subunit protein uL2 from Fervidobacterium nodosum (strain ATCC 35602 / DSM 5306 / Rt17-B1).